The primary structure comprises 209 residues: Ribonuclease HII (209 aa).

Residues 5-202 (SMTLGIDEAG…KNRILNPKLL (198 aa)) form the RNase H type-2 domain. Residues Asp11, Glu12, and Asp108 each contribute to the a divalent metal cation site.

This sequence belongs to the RNase HII family. Mn(2+) is required as a cofactor. Mg(2+) serves as cofactor.

It is found in the cytoplasm. It catalyses the reaction Endonucleolytic cleavage to 5'-phosphomonoester.. Its function is as follows. Endonuclease that specifically degrades the RNA of RNA-DNA hybrids. The sequence is that of Ribonuclease HII (rnhB) from Helicobacter pylori (strain J99 / ATCC 700824) (Campylobacter pylori J99).